Reading from the N-terminus, the 292-residue chain is Bifunctional protein FolD (292 aa).

Residues Gly-169–Gly-171, Thr-196, and Val-237 contribute to the NADP(+) site.

This sequence belongs to the tetrahydrofolate dehydrogenase/cyclohydrolase family. As to quaternary structure, homodimer.

It carries out the reaction (6R)-5,10-methylene-5,6,7,8-tetrahydrofolate + NADP(+) = (6R)-5,10-methenyltetrahydrofolate + NADPH. It catalyses the reaction (6R)-5,10-methenyltetrahydrofolate + H2O = (6R)-10-formyltetrahydrofolate + H(+). It participates in one-carbon metabolism; tetrahydrofolate interconversion. Catalyzes the oxidation of 5,10-methylenetetrahydrofolate to 5,10-methenyltetrahydrofolate and then the hydrolysis of 5,10-methenyltetrahydrofolate to 10-formyltetrahydrofolate. The sequence is that of Bifunctional protein FolD from Bifidobacterium longum (strain NCC 2705).